Consider the following 48-residue polypeptide: U1-theraphotoxin-Agm1a (48 aa).

3 disulfide bridges follow: Cys4/Cys34, Cys8/Cys40, and Cys22/Cys45. Met44 bears the Methionine sulfoxide; partial mark.

It belongs to the neurotoxin 12 (Hwtx-2) family. 01 (Ap1a) subfamily. In terms of tissue distribution, expressed by the venom gland.

It is found in the secreted. In terms of biological role, is toxic to both insects and mammals. Induces reversible paralysis when injected into S.frugiperda larvae. Reduces both the amplitude and frequency of responses from muscle (GF-TTM and GF-DLM) pathways in the D.melanogaster giant fiber circuit, suggesting an action at the neuromuscular junction, which is mediated by glutamatergic receptors. In mice, intracranial injection of 30 ug causes increased urination, myoclonus, hypermotility with circular movements followed by respiratory and generalized seizures resulting in death within 25-35 minutes of injection. In Acanthoscurria gomesiana (Tarantula spider), this protein is U1-theraphotoxin-Agm1a.